Here is a 343-residue protein sequence, read N- to C-terminus: Retroviral-like aspartic protease 1 (343 aa).

At 1 to 55 (MGSPGASLGIKKALQSEQATALPASAPAVSQPTAPAPSCLPKAGQVIPTLLREAP) the chain is on the cytoplasmic side. The propeptide occupies 1–190 (MGSPGASLGI…HLPKEIVFAN (190 aa)). The helical transmembrane segment at 56 to 76 (FSSVIAPTLLCGFLFLAWVAA) threads the bilayer. Over 77–343 (EVPEESSRMA…SEEGRQELSH (267 aa)) the chain is Extracellular. The region spanning 207 to 288 (VRFLVDSGAQ…AEEAIIGTDV (82 aa)) is the Peptidase A2 domain. D212 is an active-site residue. N276 carries an N-linked (GlcNAc...) asparagine glycan. Positions 327–343 (LIEEDPSSEEGRQELSH) are excised as a propeptide.

In terms of assembly, homodimer. Post-translationally, undergoes autocleavage which is necessary for activation of the protein. In terms of tissue distribution, expressed primarily in the granular layer of the epidermis and inner root sheath of hair follicles. In psoriatic skin, expressed throughout the stratum corneum. In ulcerated skin, expressed in the stratum granulosum of intact epidermis but almost absent from ulcerated regions. Expressed in differentiated areas of squamous cell carcinomas but not in undifferentiated tumors.

It is found in the membrane. In terms of biological role, protease responsible for filaggrin processing, essential for the maintenance of a proper epidermis organization. This chain is Retroviral-like aspartic protease 1, found in Homo sapiens (Human).